The chain runs to 183 residues: Capsid protein (183 aa).

The interval 143 to 183 (LPETAVVRRRGRSPRRRTPSPRRRRSQSPRRRRSQSPASQC) is disordered. Residues 149-176 (VRRRGRSPRRRTPSPRRRRSQSPRRRRS) are compositionally biased toward basic residues. Residues S155, S162, and S170 each carry the phosphoserine; by host modification. A 1; half-length repeat occupies 155 to 161 (SPRRRTP). A 3 X 8 AA repeats of S-P-R-R-R-[PR]-S-Q region spans residues 155 to 177 (SPRRRTPSPRRRRSQSPRRRRSQ). A Bipartite nuclear localization signal motif is present at residues 158 to 175 (RRTPSPRRRRSQSPRRRR). 2 tandem repeats follow at residues 162 to 169 (SPRRRRSQ) and 170 to 177 (SPRRRRSQ). The segment at 177 to 183 (QSPASQC) is RNA binding.

This sequence belongs to the orthohepadnavirus core antigen family. In terms of assembly, homodimerizes, then multimerizes. Interacts with cytosol exposed regions of viral L glycoprotein present in the reticulum-to-Golgi compartment. Interacts with human FLNB. Phosphorylated form interacts with host importin alpha; this interaction depends on the exposure of the NLS, which itself depends upon genome maturation and/or phosphorylation of the capsid protein. Interacts with host NUP153. Phosphorylated by host SRPK1, SRPK2, and maybe protein kinase C or GAPDH. Phosphorylation is critical for pregenomic RNA packaging. Protein kinase C phosphorylation is stimulated by HBx protein and may play a role in transport of the viral genome to the nucleus at the late step during the viral replication cycle.

Its subcellular location is the virion. It is found in the host cytoplasm. Its function is as follows. Self assembles to form an icosahedral capsid. Most capsids appear to be large particles with an icosahedral symmetry of T=4 and consist of 240 copies of capsid protein, though a fraction forms smaller T=3 particles consisting of 180 capsid proteins. Entering capsids are transported along microtubules to the nucleus. Phosphorylation of the capsid is thought to induce exposure of nuclear localization signal in the C-terminal portion of the capsid protein that allows binding to the nuclear pore complex via the importin (karyopherin-) alpha and beta. Capsids are imported in intact form through the nuclear pore into the nuclear basket, where it probably binds NUP153. Only capsids that contain the mature viral genome can release the viral DNA and capsid protein into the nucleoplasm. Immature capsids get stuck in the basket. Capsids encapsulate the pre-genomic RNA and the P protein. Pre-genomic RNA is reverse-transcribed into DNA while the capsid is still in the cytoplasm. The capsid can then either be directed to the nucleus, providing more genomes for transcription, or bud through the endoplasmic reticulum to provide new virions. This is Capsid protein from Gorilla gorilla (western gorilla).